The chain runs to 391 residues: MAQWPEKEEEEQPMFGEEYTGYIPSYLEKDEPCVVCGDKATGYHYRCITCEGCKGFFRRTIQKNLHPSYSCKYDCCCIIDKITRNQCQLCRFKKCIAVGMAMDLVLDDSKRVAKRRLIEENRERRKKEEIVKTLQNRPEPTGAEWELIRMVTEAHRHTNAQGAQWKQKRKFLPDKIGQSPVAPTSDGDKVDLEAFSEFTKIITPAITRVVDFAKKLPMFSEQLPCEDQIILLKGCCMEIMSLRAAMRYDPESETLTLSGEMAVKREQLKNGGLGVVSDAIFDLGKSLAQFNLDDTEVALLQAVLLMSSDRSGLTCMDKIEKCQETYLLAFEHYINYRKHNIPHFWPKLLMKVTDLRMIGACHASRFLHMKVECPNELFPPLFLEVFEDQEV.

Residues 1-32 are modulating; it reads MAQWPEKEEEEQPMFGEEYTGYIPSYLEKDEP. 2 NR C4-type zinc fingers span residues 33 to 53 and 71 to 95; these read CVVCGDKATGYHYRCITCEGC and CKYDCCCIIDKITRNQCQLCRFKKC. A DNA-binding region (nuclear receptor) is located at residues 33–100; the sequence is CVVCGDKATG…RFKKCIAVGM (68 aa). The 246-residue stretch at 143–388 folds into the NR LBD domain; the sequence is AEWELIRMVT…PPLFLEVFED (246 aa).

The protein belongs to the nuclear hormone receptor family. NR1 subfamily.

It localises to the nucleus. High affinity receptor for triiodothyronine. The polypeptide is Thyroid hormone receptor alpha-B (thra2) (Paralichthys olivaceus (Bastard halibut)).